Reading from the N-terminus, the 364-residue chain is 4-hydroxythreonine-4-phosphate dehydrogenase (364 aa).

Positions 148 and 149 each coordinate substrate. Residues His-177, His-216, and His-301 each contribute to the a divalent metal cation site. 3 residues coordinate substrate: Lys-309, Asn-318, and Arg-327.

The protein belongs to the PdxA family. As to quaternary structure, homodimer. The cofactor is Zn(2+). Mg(2+) serves as cofactor. Requires Co(2+) as cofactor.

It localises to the cytoplasm. The catalysed reaction is 4-(phosphooxy)-L-threonine + NAD(+) = 3-amino-2-oxopropyl phosphate + CO2 + NADH. It functions in the pathway cofactor biosynthesis; pyridoxine 5'-phosphate biosynthesis; pyridoxine 5'-phosphate from D-erythrose 4-phosphate: step 4/5. Its function is as follows. Catalyzes the NAD(P)-dependent oxidation of 4-(phosphooxy)-L-threonine (HTP) into 2-amino-3-oxo-4-(phosphooxy)butyric acid which spontaneously decarboxylates to form 3-amino-2-oxopropyl phosphate (AHAP). In Campylobacter jejuni (strain RM1221), this protein is 4-hydroxythreonine-4-phosphate dehydrogenase.